Reading from the N-terminus, the 118-residue chain is MTALAQAQCEACRADAPKVSDEELAELIREIPDWNIEVRGDHMELERVFLFRNFRHALAFTNAVGAIAEEVGHHPALLTEWGKVTVTWWSHEMRGLHRNDFIMAARTDQLAASAEGRK.

This sequence belongs to the pterin-4-alpha-carbinolamine dehydratase family.

The catalysed reaction is (4aS,6R)-4a-hydroxy-L-erythro-5,6,7,8-tetrahydrobiopterin = (6R)-L-erythro-6,7-dihydrobiopterin + H2O. The chain is Putative pterin-4-alpha-carbinolamine dehydratase from Stutzerimonas stutzeri (strain A1501) (Pseudomonas stutzeri).